We begin with the raw amino-acid sequence, 150 residues long: Protein SLM6 (150 aa).

Topologically, residues 1-76 (MCSRFSSTSL…SLLRSGVFPS (76 aa)) are extracellular. A helical transmembrane segment spans residues 77–97 (WLFCMFSSILALAISNSFFFF). Over 98 to 104 (SSNACFS) the chain is Cytoplasmic. A helical membrane pass occupies residues 105 to 125 (LLFNSFLVTGFSFSADLLVLA). Residues 126 to 150 (AAADTLESNVSNDIGGNCATRLFKL) lie on the Extracellular side of the membrane.

It localises to the membrane. In Saccharomyces cerevisiae (strain ATCC 204508 / S288c) (Baker's yeast), this protein is Protein SLM6.